Here is a 325-residue protein sequence, read N- to C-terminus: Tetraacyldisaccharide 4'-kinase (325 aa).

53 to 60 (SVGGNGKT) is a binding site for ATP.

Belongs to the LpxK family.

The enzyme catalyses a lipid A disaccharide + ATP = a lipid IVA + ADP + H(+). Its pathway is glycolipid biosynthesis; lipid IV(A) biosynthesis; lipid IV(A) from (3R)-3-hydroxytetradecanoyl-[acyl-carrier-protein] and UDP-N-acetyl-alpha-D-glucosamine: step 6/6. Functionally, transfers the gamma-phosphate of ATP to the 4'-position of a tetraacyldisaccharide 1-phosphate intermediate (termed DS-1-P) to form tetraacyldisaccharide 1,4'-bis-phosphate (lipid IVA). The chain is Tetraacyldisaccharide 4'-kinase from Actinobacillus succinogenes (strain ATCC 55618 / DSM 22257 / CCUG 43843 / 130Z).